Consider the following 510-residue polypeptide: MFIESFKVESPNVKYTENEIHSVYDYQTTELVHENKNGAFQWTVKPKTVKYEFKTDTHVPKLGVMLVGWGGNNGSTLTAGVIANREGISWATKEKVQQANYFGSLTQASSIRVGSFNGEEIYAPFKSLLPMVNPEEIVFGGWDISDMNLADAMARAKVLDIDLQKQMRPFMEHMVPLPGIFDPDFIAANQGSRANHVIKGTKKQQLEQVIKDIREFKEKNKVDKVVVLWTANTERYSNVVVGLNDTTENLMSSLDKDEAEISPSTLYAIACVLENVPFINGSPQNTFVPGLIELAIKRNCLIGGDDFKSGQTKMKSVLVDFLVGAGIKPTSIVSYNHLGNNDGMNLSAPQTFRSKEISKSNVVDDMVGSNGILYEPGEHPDHVVVIKYVPCVGDSKRAMDEYTSEIFMGGKNTIVMHNTCEDSLLAAPIILDLVLLAELTTRIQFMSENEGKFHSFHPVATLLSYLSKAPLVPPGTPVVNALSKQRAMLENVLRACVGLAPENNMILEYK.

Belongs to the myo-inositol 1-phosphate synthase family. NAD(+) serves as cofactor. Expressed in siliques, leaves, roots, seed endosperm, but not in embryos. Highest expression in roots. Confined to vascular tissue and hydathodes of leaves.

It localises to the cytoplasm. The catalysed reaction is D-glucose 6-phosphate = 1D-myo-inositol 3-phosphate. The protein operates within polyol metabolism; myo-inositol biosynthesis; myo-inositol from D-glucose 6-phosphate: step 1/2. In terms of biological role, key enzyme in myo-inositol biosynthesis pathway that catalyzes the conversion of glucose 6-phosphate to 1-myo-inositol 1-phosphate in a NAD-dependent manner. This is Probable inositol 3-phosphate synthase isozyme 3 (IPS3) from Arabidopsis thaliana (Mouse-ear cress).